The chain runs to 287 residues: Hydroxysteroid 11-beta-dehydrogenase 1-like protein (287 aa).

The signal sequence occupies residues 1–20; sequence MMKPFGKVLCAAGSLAVLLA. NADP(+) is bound by residues 41 to 67, 92 to 93, and 119 to 121; these read GASA…TARR, DM, and NHI. Serine 170 contributes to the substrate binding site. The active-site Proton acceptor is the tyrosine 183. NADP(+) contacts are provided by residues 183–187 and 216–222; these read YSATK and GLIDTDA.

Belongs to the short-chain dehydrogenases/reductases (SDR) family.

The protein resides in the secreted. It catalyses the reaction cortisone + NADPH + H(+) = cortisol + NADP(+). Unidirectional NADP(+)-dependent cortisol dehydrogenase (in vitro). This chain is Hydroxysteroid 11-beta-dehydrogenase 1-like protein (HSD11B1L), found in Gallus gallus (Chicken).